Consider the following 513-residue polypeptide: Sterol 14-alpha demethylase (513 aa).

Residues 8–28 (AYALLAFVAIMALNVTYQFLF) traverse the membrane as a helical segment. 2 N-linked (GlcNAc...) asparagine glycosylation sites follow: Asn-32 and Asn-332. Residue Cys-453 coordinates heme.

The protein belongs to the cytochrome P450 family. Heme is required as a cofactor.

The protein localises to the endoplasmic reticulum membrane. The enzyme catalyses a 14alpha-methyl steroid + 3 reduced [NADPH--hemoprotein reductase] + 3 O2 = a Delta(14) steroid + formate + 3 oxidized [NADPH--hemoprotein reductase] + 4 H2O + 4 H(+). The catalysed reaction is a 14alpha-methyl steroid + reduced [NADPH--hemoprotein reductase] + O2 = a 14alpha-hydroxymethyl steroid + oxidized [NADPH--hemoprotein reductase] + H2O + H(+). It catalyses the reaction a 14alpha-hydroxymethyl steroid + reduced [NADPH--hemoprotein reductase] + O2 = a 14alpha-formyl steroid + oxidized [NADPH--hemoprotein reductase] + 2 H2O + H(+). It carries out the reaction a 14alpha-formyl steroid + reduced [NADPH--hemoprotein reductase] + O2 = a Delta(14) steroid + formate + oxidized [NADPH--hemoprotein reductase] + H2O + 2 H(+). The enzyme catalyses lanosterol + 3 reduced [NADPH--hemoprotein reductase] + 3 O2 = 4,4-dimethyl-5alpha-cholesta-8,14,24-trien-3beta-ol + formate + 3 oxidized [NADPH--hemoprotein reductase] + 4 H2O + 4 H(+). The catalysed reaction is lanosterol + reduced [NADPH--hemoprotein reductase] + O2 = 32-hydroxylanosterol + oxidized [NADPH--hemoprotein reductase] + H2O + H(+). It catalyses the reaction 32-hydroxylanosterol + reduced [NADPH--hemoprotein reductase] + O2 = 32-oxolanosterol + oxidized [NADPH--hemoprotein reductase] + 2 H2O + H(+). It carries out the reaction 32-oxolanosterol + reduced [NADPH--hemoprotein reductase] + O2 = 4,4-dimethyl-5alpha-cholesta-8,14,24-trien-3beta-ol + formate + oxidized [NADPH--hemoprotein reductase] + H2O + 2 H(+). The enzyme catalyses eburicol + 3 reduced [NADPH--hemoprotein reductase] + 3 O2 = 14-demethyleburicol + formate + 3 oxidized [NADPH--hemoprotein reductase] + 4 H2O + 4 H(+). The catalysed reaction is eburicol + reduced [NADPH--hemoprotein reductase] + O2 = 32-hydroxyeburicol + oxidized [NADPH--hemoprotein reductase] + H2O + H(+). It catalyses the reaction 32-hydroxyeburicol + reduced [NADPH--hemoprotein reductase] + O2 = 32-oxoeburicol + oxidized [NADPH--hemoprotein reductase] + 2 H2O + H(+). It carries out the reaction 32-oxoeburicol + reduced [NADPH--hemoprotein reductase] + O2 = 14-demethyleburicol + formate + oxidized [NADPH--hemoprotein reductase] + H2O + 2 H(+). The protein operates within steroid biosynthesis; sterol biosynthesis. In terms of biological role, sterol 14alpha-demethylase, encoded by cyp51A, cyp51B and cyp51C, that plays a critical role in the third module of ergosterol biosynthesis pathway, being ergosterol the major sterol component in fungal membranes that participates in a variety of functions. The third module or late pathway involves the ergosterol synthesis itself through consecutive reactions that mainly occur in the endoplasmic reticulum (ER) membrane. In filamentous fungi, during the initial step of this module, lanosterol (lanosta-8,24-dien-3beta-ol) can be metabolized to eburicol. Sterol 14alpha-demethylase catalyzes the three-step oxidative removal of the 14alpha-methyl group (C-32) of both these sterols in the form of formate, and converts eburicol and lanosterol to 14-demethyleburicol (4,4,24-trimethylergosta-8,14,24(28)-trienol) and 4,4-dimethyl-5alpha-cholesta-8,14,24-trien-3beta-ol, respectively, which are further metabolized by other enzymes in the pathway to ergosterol. Can also use substrates not intrinsic to fungi, such as 24,25-dihydrolanosterol (DHL), producing 4,4'-dimethyl-8,14-cholestadien-3-beta-ol, but at lower rates than the endogenous substrates. As a target of azole drugs, plays a crucial role in azole drug susceptibility. The chain is Sterol 14-alpha demethylase from Aspergillus flavus (strain ATCC 200026 / FGSC A1120 / IAM 13836 / NRRL 3357 / JCM 12722 / SRRC 167).